Consider the following 193-residue polypeptide: uncharacterized protein (193 aa).

Residues 1-14 form the signal peptide; that stretch reads MSTSLLFSLSPSSS.

This is an uncharacterized protein from Saccharomyces cerevisiae (strain ATCC 204508 / S288c) (Baker's yeast).